The following is a 399-amino-acid chain: S-adenosylmethionine synthase (399 aa).

Histidine 17 is a binding site for ATP. Aspartate 19 is a Mg(2+) binding site. Glutamate 52 lines the K(+) pocket. L-methionine-binding residues include glutamate 65 and glutamine 109. Positions glutamine 109–alanine 119 are flexible loop. ATP is bound by residues aspartate 177–lysine 179, lysine 243–phenylalanine 244, aspartate 252, arginine 258–lysine 259, alanine 275, and lysine 279. Aspartate 252 serves as a coordination point for L-methionine. Residue lysine 283 participates in L-methionine binding.

The protein belongs to the AdoMet synthase family. In terms of assembly, homotetramer; dimer of dimers. It depends on Mg(2+) as a cofactor. The cofactor is K(+).

It is found in the cytoplasm. It catalyses the reaction L-methionine + ATP + H2O = S-adenosyl-L-methionine + phosphate + diphosphate. The protein operates within amino-acid biosynthesis; S-adenosyl-L-methionine biosynthesis; S-adenosyl-L-methionine from L-methionine: step 1/1. Its function is as follows. Catalyzes the formation of S-adenosylmethionine (AdoMet) from methionine and ATP. The overall synthetic reaction is composed of two sequential steps, AdoMet formation and the subsequent tripolyphosphate hydrolysis which occurs prior to release of AdoMet from the enzyme. The sequence is that of S-adenosylmethionine synthase from Bradyrhizobium sp. (strain BTAi1 / ATCC BAA-1182).